An 89-amino-acid chain; its full sequence is C-C motif chemokine 18 (89 aa).

The first 20 residues, 1 to 20 (MKGLAAALLVLVCTMALCSC), serve as a signal peptide directing secretion. 2 cysteine pairs are disulfide-bonded: cysteine 30–cysteine 54 and cysteine 31–cysteine 70.

It belongs to the intercrine beta (chemokine CC) family. The Cys-30/Cys-54 disulfide bond is required for activity. As to expression, expressed at high levels in lung, lymph nodes, placenta, bone marrow, dendritic cells present in germinal centers and T-cell areas of secondary lymphoid organs and macrophages derived from peripheral blood monocytes. Not expressed by peripheral blood monocytes and a monocyte-to-macrophage differentiation is a prerequisite for expression. Expressed in synovial fluids from patients with rheumatoid and septic arthritis and in ovarian carcinoma ascitic fluid.

It is found in the secreted. In terms of biological role, chemotactic factor that attracts lymphocytes but not monocytes or granulocytes. May be involved in B-cell migration into B-cell follicles in lymph nodes. Attracts naive T-lymphocytes toward dendritic cells and activated macrophages in lymph nodes, has chemotactic activity for naive T-cells, CD4+ and CD8+ T-cells and thus may play a role in both humoral and cell-mediated immunity responses. The protein is C-C motif chemokine 18 (CCL18) of Homo sapiens (Human).